A 240-amino-acid chain; its full sequence is tRNA (guanine-N(1)-)-methyltransferase (240 aa).

S-adenosyl-L-methionine-binding positions include glycine 110 and 129–134; that span reads LGDFVL.

Belongs to the RNA methyltransferase TrmD family. Homodimer.

It is found in the cytoplasm. It carries out the reaction guanosine(37) in tRNA + S-adenosyl-L-methionine = N(1)-methylguanosine(37) in tRNA + S-adenosyl-L-homocysteine + H(+). Its function is as follows. Specifically methylates guanosine-37 in various tRNAs. This chain is tRNA (guanine-N(1)-)-methyltransferase, found in Clostridium botulinum (strain Kyoto / Type A2).